The sequence spans 375 residues: Queuine tRNA-ribosyltransferase (375 aa).

The Proton acceptor role is filled by Asp-94. Substrate is bound by residues 94–98 (DSGGF), Asp-148, Gln-191, and Gly-218. Residues 249–255 (GVGTPED) are RNA binding. Asp-268 acts as the Nucleophile in catalysis. Residues 273–277 (TRIAR) are RNA binding; important for wobble base 34 recognition. Zn(2+) contacts are provided by Cys-306, Cys-308, Cys-311, and His-337.

It belongs to the queuine tRNA-ribosyltransferase family. In terms of assembly, homodimer. Within each dimer, one monomer is responsible for RNA recognition and catalysis, while the other monomer binds to the replacement base PreQ1. Zn(2+) serves as cofactor.

The enzyme catalyses 7-aminomethyl-7-carbaguanine + guanosine(34) in tRNA = 7-aminomethyl-7-carbaguanosine(34) in tRNA + guanine. Its pathway is tRNA modification; tRNA-queuosine biosynthesis. Functionally, catalyzes the base-exchange of a guanine (G) residue with the queuine precursor 7-aminomethyl-7-deazaguanine (PreQ1) at position 34 (anticodon wobble position) in tRNAs with GU(N) anticodons (tRNA-Asp, -Asn, -His and -Tyr). Catalysis occurs through a double-displacement mechanism. The nucleophile active site attacks the C1' of nucleotide 34 to detach the guanine base from the RNA, forming a covalent enzyme-RNA intermediate. The proton acceptor active site deprotonates the incoming PreQ1, allowing a nucleophilic attack on the C1' of the ribose to form the product. After dissociation, two additional enzymatic reactions on the tRNA convert PreQ1 to queuine (Q), resulting in the hypermodified nucleoside queuosine (7-(((4,5-cis-dihydroxy-2-cyclopenten-1-yl)amino)methyl)-7-deazaguanosine). This chain is Queuine tRNA-ribosyltransferase, found in Caldanaerobacter subterraneus subsp. tengcongensis (strain DSM 15242 / JCM 11007 / NBRC 100824 / MB4) (Thermoanaerobacter tengcongensis).